A 102-amino-acid polypeptide reads, in one-letter code: Iron-sulfur cluster assembly protein CyaY (102 aa).

It belongs to the frataxin family.

Functionally, involved in iron-sulfur (Fe-S) cluster assembly. May act as a regulator of Fe-S biogenesis. This is Iron-sulfur cluster assembly protein CyaY from Actinobacillus succinogenes (strain ATCC 55618 / DSM 22257 / CCUG 43843 / 130Z).